A 590-amino-acid chain; its full sequence is Aspartate--tRNA(Asp/Asn) ligase (590 aa).

Glutamate 175 contributes to the L-aspartate binding site. Residues 199 to 202 are aspartate; the sequence is QQYK. 2 residues coordinate L-aspartate: arginine 221 and histidine 450. 221 to 223 is an ATP binding site; that stretch reads RDE. Glutamate 484 serves as a coordination point for ATP. Arginine 491 is a binding site for L-aspartate. 536–539 contacts ATP; sequence GVDR.

It belongs to the class-II aminoacyl-tRNA synthetase family. Type 1 subfamily. Homodimer.

It localises to the cytoplasm. The enzyme catalyses tRNA(Asx) + L-aspartate + ATP = L-aspartyl-tRNA(Asx) + AMP + diphosphate. In terms of biological role, aspartyl-tRNA synthetase with relaxed tRNA specificity since it is able to aspartylate not only its cognate tRNA(Asp) but also tRNA(Asn). Reaction proceeds in two steps: L-aspartate is first activated by ATP to form Asp-AMP and then transferred to the acceptor end of tRNA(Asp/Asn). The chain is Aspartate--tRNA(Asp/Asn) ligase from Rhodopseudomonas palustris (strain HaA2).